A 552-amino-acid polypeptide reads, in one-letter code: CTP synthase (552 aa).

Residues 1-267 (MSKFVFVTGG…AHQTLELLRM (267 aa)) form an amidoligase domain region. Serine 13 serves as a coordination point for CTP. Serine 13 contributes to the UTP binding site. ATP is bound by residues 14-19 (SIGKGI) and aspartate 71. The Mg(2+) site is built by aspartate 71 and glutamate 141. Residues 148–150 (DIE), 188–193 (KTKPTQ), and lysine 224 contribute to the CTP site. Residues 188-193 (KTKPTQ) and lysine 224 each bind UTP. Residues 292-534 (TVALVGKYVQ…INAVLKRRNA (243 aa)) form the Glutamine amidotransferase type-1 domain. Glycine 354 is a binding site for L-glutamine. Cysteine 381 (nucleophile; for glutamine hydrolysis) is an active-site residue. L-glutamine-binding positions include 382–385 (LGMQ), glutamate 405, and arginine 462. Catalysis depends on residues histidine 507 and glutamate 509.

This sequence belongs to the CTP synthase family. As to quaternary structure, homotetramer.

The catalysed reaction is UTP + L-glutamine + ATP + H2O = CTP + L-glutamate + ADP + phosphate + 2 H(+). It catalyses the reaction L-glutamine + H2O = L-glutamate + NH4(+). The enzyme catalyses UTP + NH4(+) + ATP = CTP + ADP + phosphate + 2 H(+). The protein operates within pyrimidine metabolism; CTP biosynthesis via de novo pathway; CTP from UDP: step 2/2. Its activity is regulated as follows. Allosterically activated by GTP, when glutamine is the substrate; GTP has no effect on the reaction when ammonia is the substrate. The allosteric effector GTP functions by stabilizing the protein conformation that binds the tetrahedral intermediate(s) formed during glutamine hydrolysis. Inhibited by the product CTP, via allosteric rather than competitive inhibition. In terms of biological role, catalyzes the ATP-dependent amination of UTP to CTP with either L-glutamine or ammonia as the source of nitrogen. Regulates intracellular CTP levels through interactions with the four ribonucleotide triphosphates. The chain is CTP synthase from Synechocystis sp. (strain ATCC 27184 / PCC 6803 / Kazusa).